A 527-amino-acid polypeptide reads, in one-letter code: Bifunctional pantoate ligase/cytidylate kinase (527 aa).

Positions 1-277 (MRQLISPEAL…VGTARLIDNL (277 aa)) are pantoate--beta-alanine ligase. 27 to 34 (MGALHAGH) provides a ligand contact to ATP. Catalysis depends on His34, which acts as the Proton donor. Gln58 serves as a coordination point for (R)-pantoate. Residue Gln58 coordinates beta-alanine. 147–150 (GEKD) contacts ATP. Position 153 (Gln153) interacts with (R)-pantoate. ATP-binding positions include Val176 and 184-187 (LSSR). A cytidylate kinase region spans residues 278-527 (TLQGRRPIIA…GQTPSPLSLG (250 aa)). Residues 507-527 (GLGDSSPQATPGQTPSPLSLG) form a disordered region. Residues 511 to 527 (SSPQATPGQTPSPLSLG) show a composition bias toward polar residues.

It in the N-terminal section; belongs to the pantothenate synthetase family. The protein in the C-terminal section; belongs to the cytidylate kinase family. Type 1 subfamily.

It localises to the cytoplasm. It catalyses the reaction (R)-pantoate + beta-alanine + ATP = (R)-pantothenate + AMP + diphosphate + H(+). The enzyme catalyses CMP + ATP = CDP + ADP. It carries out the reaction dCMP + ATP = dCDP + ADP. It participates in cofactor biosynthesis; (R)-pantothenate biosynthesis; (R)-pantothenate from (R)-pantoate and beta-alanine: step 1/1. Catalyzes the condensation of pantoate with beta-alanine in an ATP-dependent reaction via a pantoyl-adenylate intermediate. Functionally, catalyzes the transfer of a phosphate group from ATP to either CMP or dCMP to form CDP or dCDP and ADP, respectively. This chain is Bifunctional pantoate ligase/cytidylate kinase, found in Synechococcus elongatus (strain ATCC 33912 / PCC 7942 / FACHB-805) (Anacystis nidulans R2).